Reading from the N-terminus, the 203-residue chain is MSRNEVLLNGDINFKEVRCVGDNGEVYGIISSKEALHIAQNLGLDLVLISASAKPPVCKVMDYNKFRYQNEKKIKEAKKKQKQIEIKEIKLSTQIAQNDINYKVKHAREFIESNKHVKFKVVLKGRESQNSKAGLDVLFRVQTMMQDLANPEKEPKTEGRFVSWMFVPKAKEAPKNEKKTKENNPPFNRINLMKGENHAKNED.

Residues 172–182 show a composition bias toward basic and acidic residues; that stretch reads EAPKNEKKTKE. The disordered stretch occupies residues 172 to 203; the sequence is EAPKNEKKTKENNPPFNRINLMKGENHAKNED.

This sequence belongs to the IF-3 family. In terms of assembly, monomer.

The protein resides in the cytoplasm. Functionally, IF-3 binds to the 30S ribosomal subunit and shifts the equilibrium between 70S ribosomes and their 50S and 30S subunits in favor of the free subunits, thus enhancing the availability of 30S subunits on which protein synthesis initiation begins. The sequence is that of Translation initiation factor IF-3 from Helicobacter pylori (strain ATCC 700392 / 26695) (Campylobacter pylori).